A 327-amino-acid chain; its full sequence is L-lactate dehydrogenase (327 aa).

Residues Val-18, Asp-39, Lys-44, Tyr-69, and 83-84 each bind NAD(+); that span reads GA. Residues Gln-86, Arg-92, and 124 to 127 contribute to the substrate site; that span reads NPVD. NAD(+) is bound by residues 122-124 and Ser-147; that span reads AAN. 152-155 is a substrate binding site; the sequence is DSAR. Beta-D-fructose 1,6-bisphosphate-binding residues include Arg-157 and His-172. His-179 acts as the Proton acceptor in catalysis. Residue Tyr-224 is modified to Phosphotyrosine. Residue Thr-233 participates in substrate binding.

It belongs to the LDH/MDH superfamily. LDH family. Homotetramer.

Its subcellular location is the cytoplasm. The enzyme catalyses (S)-lactate + NAD(+) = pyruvate + NADH + H(+). It functions in the pathway fermentation; pyruvate fermentation to lactate; (S)-lactate from pyruvate: step 1/1. Allosterically activated by fructose 1,6-bisphosphate (FBP). Its function is as follows. Catalyzes the conversion of lactate to pyruvate. The chain is L-lactate dehydrogenase from Streptococcus uberis (strain ATCC BAA-854 / 0140J).